Consider the following 412-residue polypeptide: Acyl-[acyl-carrier-protein] hydrolase FATB3, chloroplastic (412 aa).

The segment covering 1–25 has biased composition (low complexity); the sequence is MVAAAASSAFFSFPTPGTSPKPGKF. The transit peptide at 1-50 directs the protein to the chloroplast; sequence MVAAAASSAFFSFPTPGTSPKPGKFGNWPSSLSIPFNPKSNHNGGIQVKA. A disordered region spans residues 1-63; sequence MVAAAASSAF…AHPKANGSAV (63 aa). A compositionally biased stretch (polar residues) spans 28 to 44; the sequence is WPSSLSIPFNPKSNHNG. Catalysis depends on residues asparagine 310, histidine 312, and cysteine 347. Positions 393–412 are disordered; it reads NAGATGAVSTGKTSNGNSVS. Residues 399 to 412 are compositionally biased toward polar residues; the sequence is AVSTGKTSNGNSVS.

This sequence belongs to the acyl-ACP thioesterase family.

The protein localises to the plastid. It localises to the chloroplast. It carries out the reaction tetradecanoyl-[ACP] + H2O = tetradecanoate + holo-[ACP] + H(+). Plays an essential role in chain termination during de novo fatty acid synthesis. Possesses thioesterase activity for medium chain acyl-ACPs. Main substrate is 14:0. The polypeptide is Acyl-[acyl-carrier-protein] hydrolase FATB3, chloroplastic (Cuphea viscosissima (Blue waxweed)).